The following is a 672-amino-acid chain: Poly-beta-1,6-N-acetyl-D-glucosamine N-deacetylase (672 aa).

The N-terminal stretch at 1–20 (MLRNGNKYLLMLVSIIMLTA) is a signal peptide. Cys-21 is lipidated: N-palmitoyl cysteine. Cys-21 is lipidated: S-diacylglycerol cysteine. A NodB homology domain is found at 107–349 (KAVVLTFDDG…IQRVKDMQIS (243 aa)).

It belongs to the polysaccharide deacetylase family.

Its subcellular location is the cell outer membrane. Its function is as follows. Catalyzes the N-deacetylation of poly-beta-1,6-N-acetyl-D-glucosamine (PGA), a biofilm adhesin polysaccharide. N-deacetylation promotes PGA export through the PgaA porin. This chain is Poly-beta-1,6-N-acetyl-D-glucosamine N-deacetylase (pgaB), found in Escherichia coli O157:H7.